A 479-amino-acid polypeptide reads, in one-letter code: MAAKKTTSKNTVNSANGFVFQILGPVVDVKFSEDNIPMIYDALVVDNNGVELVLEVEQHMGDEVVRTIAMGPTEGLAKGLPVINTNAPILAPVGDDVLGRMFNVTGHAIDEKPEFTGKRMPIHRDAPAYEELITNAEILETGIKVIDLMIPFAKGGKIGLFGGAGVGKTVLIQELINNIAKAHSGVSVFAGVGERTREGNDLYHEFIEAGVLDKTSLVFGQMNEPPGARMRVALTGLTIAEHFRDEKNMDVLLFIDNIFRFTQAGSEVSALLGRMPSAVGYQPTLSTEMGSLQERITSTNKGSITSVQAVYVPADDLTDPAPATTFTHLDAKIVLDRSIASLGIYPAVDPLSSSSRMLDPEIIGEEHYNVALGVQGTLQKYQDLQSIIAILGMDELSAEDKLIVQRARKIRNFLSQSFYVGEKFTGRPGQYVKVSDTVRSFKMILDGEMDDIPEILFLYKGTAEDVIQAYNETKVKNKK.

Residue Gly-162–Thr-169 coordinates ATP.

It belongs to the ATPase alpha/beta chains family. In terms of assembly, F-type ATPases have 2 components, CF(1) - the catalytic core - and CF(0) - the membrane proton channel. CF(1) has five subunits: alpha(3), beta(3), gamma(1), delta(1), epsilon(1). CF(0) has three main subunits: a(1), b(2) and c(9-12). The alpha and beta chains form an alternating ring which encloses part of the gamma chain. CF(1) is attached to CF(0) by a central stalk formed by the gamma and epsilon chains, while a peripheral stalk is formed by the delta and b chains.

It localises to the cell membrane. It catalyses the reaction ATP + H2O + 4 H(+)(in) = ADP + phosphate + 5 H(+)(out). Its function is as follows. Produces ATP from ADP in the presence of a proton gradient across the membrane. The catalytic sites are hosted primarily by the beta subunits. The sequence is that of ATP synthase subunit beta from Mesoplasma florum (strain ATCC 33453 / NBRC 100688 / NCTC 11704 / L1) (Acholeplasma florum).